A 379-amino-acid polypeptide reads, in one-letter code: Deoxyhypusine synthase (379 aa).

NAD(+) is bound by residues 108–112 (SNLIS), 134–136 (TAG), glutamate 140, and aspartate 257. 139–140 (EE) is a binding site for spermidine. Aspartate 262 serves as a coordination point for spermidine. Residue glycine 304 coordinates NAD(+). Histidine 309 lines the spermidine pocket. 329-330 (TG) contributes to the NAD(+) binding site. Spermidine-binding positions include 335–337 (GSD) and 344–350 (EAVSWGK). Catalysis depends on lysine 350, which acts as the Nucleophile. 363-364 (DA) contacts NAD(+).

Belongs to the deoxyhypusine synthase family. NAD(+) is required as a cofactor.

It carries out the reaction [eIF5A protein]-L-lysine + spermidine = [eIF5A protein]-deoxyhypusine + propane-1,3-diamine. The protein operates within protein modification; eIF5A hypusination. Catalyzes the NAD-dependent oxidative cleavage of spermidine and the subsequent transfer of the butylamine moiety of spermidine to the epsilon-amino group of a specific lysine residue of the eIF-5A precursor protein to form the intermediate deoxyhypusine residue. This chain is Deoxyhypusine synthase (DYS1), found in Kluyveromyces lactis (strain ATCC 8585 / CBS 2359 / DSM 70799 / NBRC 1267 / NRRL Y-1140 / WM37) (Yeast).